Here is a 209-residue protein sequence, read N- to C-terminus: Somatotropin (209 aa).

Positions 1-22 are cleaved as a signal peptide; that stretch reads MGQVFLLMPVLLVAGYLSLGAA. H38 contributes to the Zn(2+) binding site. A disulfide bridge connects residues C71 and C182. Residue E191 coordinates Zn(2+). Cysteines 199 and 207 form a disulfide.

This sequence belongs to the somatotropin/prolactin family.

The protein localises to the secreted. Growth hormone plays an important role in growth control and is involved in the regulation of several anabolic processes. Implicated as an osmoregulatory substance important for seawater adaptation. In Esox lucius (Northern pike), this protein is Somatotropin (gh).